The sequence spans 61 residues: Sperm protamine P1 (61 aa).

Residues 1–61 form a disordered region; that stretch reads MARYRRRSRS…RRYSRRGRRR (61 aa).

The protein belongs to the protamine P1 family. Testis.

It localises to the nucleus. The protein resides in the chromosome. Functionally, protamines substitute for histones in the chromatin of sperm during the haploid phase of spermatogenesis. They compact sperm DNA into a highly condensed, stable and inactive complex. In Dasyurus hallucatus (Northern quoll), this protein is Sperm protamine P1 (PRM1).